Consider the following 103-residue polypeptide: Large ribosomal subunit protein bL21 (103 aa).

This sequence belongs to the bacterial ribosomal protein bL21 family. In terms of assembly, part of the 50S ribosomal subunit. Contacts protein L20.

Functionally, this protein binds to 23S rRNA in the presence of protein L20. In Lactobacillus acidophilus (strain ATCC 700396 / NCK56 / N2 / NCFM), this protein is Large ribosomal subunit protein bL21.